A 603-amino-acid polypeptide reads, in one-letter code: Elongation factor 4 (603 aa).

In terms of domain architecture, tr-type G spans 7–189 (SRIRNFSIIA…SIVHLVPPPQ (183 aa)). GTP-binding positions include 19-24 (DHGKST) and 136-139 (NKID).

It belongs to the TRAFAC class translation factor GTPase superfamily. Classic translation factor GTPase family. LepA subfamily.

It localises to the cell inner membrane. The catalysed reaction is GTP + H2O = GDP + phosphate + H(+). Its function is as follows. Required for accurate and efficient protein synthesis under certain stress conditions. May act as a fidelity factor of the translation reaction, by catalyzing a one-codon backward translocation of tRNAs on improperly translocated ribosomes. Back-translocation proceeds from a post-translocation (POST) complex to a pre-translocation (PRE) complex, thus giving elongation factor G a second chance to translocate the tRNAs correctly. Binds to ribosomes in a GTP-dependent manner. This chain is Elongation factor 4, found in Cyanothece sp. (strain PCC 7425 / ATCC 29141).